An 890-amino-acid polypeptide reads, in one-letter code: DNA mismatch repair protein MutS (890 aa).

Position 607–614 (607–614) interacts with ATP; the sequence is GPNMSGKS.

The protein belongs to the DNA mismatch repair MutS family.

In terms of biological role, this protein is involved in the repair of mismatches in DNA. It is possible that it carries out the mismatch recognition step. This protein has a weak ATPase activity. This is DNA mismatch repair protein MutS from Bacillus thuringiensis subsp. konkukian (strain 97-27).